Here is a 348-residue protein sequence, read N- to C-terminus: Phospho-2-dehydro-3-deoxyheptonate aldolase, Trp-sensitive (348 aa).

It belongs to the class-I DAHP synthase family.

The catalysed reaction is D-erythrose 4-phosphate + phosphoenolpyruvate + H2O = 7-phospho-2-dehydro-3-deoxy-D-arabino-heptonate + phosphate. It functions in the pathway metabolic intermediate biosynthesis; chorismate biosynthesis; chorismate from D-erythrose 4-phosphate and phosphoenolpyruvate: step 1/7. In terms of biological role, stereospecific condensation of phosphoenolpyruvate (PEP) and D-erythrose-4-phosphate (E4P) giving rise to 3-deoxy-D-arabino-heptulosonate-7-phosphate (DAHP). The chain is Phospho-2-dehydro-3-deoxyheptonate aldolase, Trp-sensitive (aroH) from Escherichia coli O6:H1 (strain CFT073 / ATCC 700928 / UPEC).